The sequence spans 475 residues: Ribulose bisphosphate carboxylase large chain (475 aa).

The propeptide occupies methionine 1–serine 2. At proline 3 the chain carries N-acetylproline. Position 14 is an N6,N6,N6-trimethyllysine (lysine 14). Substrate is bound by residues asparagine 123 and threonine 173. Lysine 175 functions as the Proton acceptor in the catalytic mechanism. Lysine 177 serves as a coordination point for substrate. 3 residues coordinate Mg(2+): lysine 201, aspartate 203, and glutamate 204. At lysine 201 the chain carries N6-carboxylysine. The Proton acceptor role is filled by histidine 294. Positions 295, 327, and 379 each coordinate substrate.

It belongs to the RuBisCO large chain family. Type I subfamily. In terms of assembly, heterohexadecamer of 8 large chains and 8 small chains; disulfide-linked. The disulfide link is formed within the large subunit homodimers. Requires Mg(2+) as cofactor. The disulfide bond which can form in the large chain dimeric partners within the hexadecamer appears to be associated with oxidative stress and protein turnover.

The protein localises to the plastid. The protein resides in the chloroplast. The enzyme catalyses 2 (2R)-3-phosphoglycerate + 2 H(+) = D-ribulose 1,5-bisphosphate + CO2 + H2O. It catalyses the reaction D-ribulose 1,5-bisphosphate + O2 = 2-phosphoglycolate + (2R)-3-phosphoglycerate + 2 H(+). Functionally, ruBisCO catalyzes two reactions: the carboxylation of D-ribulose 1,5-bisphosphate, the primary event in carbon dioxide fixation, as well as the oxidative fragmentation of the pentose substrate in the photorespiration process. Both reactions occur simultaneously and in competition at the same active site. In Pinus pinea (Italian stone pine), this protein is Ribulose bisphosphate carboxylase large chain.